A 234-amino-acid polypeptide reads, in one-letter code: 2-C-methyl-D-erythritol 4-phosphate cytidylyltransferase (234 aa).

Belongs to the IspD/TarI cytidylyltransferase family. IspD subfamily.

The catalysed reaction is 2-C-methyl-D-erythritol 4-phosphate + CTP + H(+) = 4-CDP-2-C-methyl-D-erythritol + diphosphate. It participates in isoprenoid biosynthesis; isopentenyl diphosphate biosynthesis via DXP pathway; isopentenyl diphosphate from 1-deoxy-D-xylulose 5-phosphate: step 2/6. Functionally, catalyzes the formation of 4-diphosphocytidyl-2-C-methyl-D-erythritol from CTP and 2-C-methyl-D-erythritol 4-phosphate (MEP). The polypeptide is 2-C-methyl-D-erythritol 4-phosphate cytidylyltransferase (Pseudomonas paraeruginosa (strain DSM 24068 / PA7) (Pseudomonas aeruginosa (strain PA7))).